Consider the following 540-residue polypeptide: Chaperonin GroEL (540 aa).

Residues 30–33 (TLGP), 87–91 (DGTTT), Gly414, 479–481 (NAL), and Asp495 each bind ATP.

This sequence belongs to the chaperonin (HSP60) family. As to quaternary structure, forms a cylinder of 14 subunits composed of two heptameric rings stacked back-to-back. Interacts with the co-chaperonin GroES.

The protein resides in the cytoplasm. The catalysed reaction is ATP + H2O + a folded polypeptide = ADP + phosphate + an unfolded polypeptide.. Together with its co-chaperonin GroES, plays an essential role in assisting protein folding. The GroEL-GroES system forms a nano-cage that allows encapsulation of the non-native substrate proteins and provides a physical environment optimized to promote and accelerate protein folding. This Rubrobacter xylanophilus (strain DSM 9941 / JCM 11954 / NBRC 16129 / PRD-1) protein is Chaperonin GroEL.